The sequence spans 103 residues: Histone H4 (103 aa).

The span at 1–14 (MSGRGKGGKGLGKG) shows a compositional bias: gly residues. The disordered stretch occupies residues 1–20 (MSGRGKGGKGLGKGGAKRHR). Serine 2 carries the post-translational modification N-acetylserine. Serine 2 is subject to Phosphoserine. At arginine 4 the chain carries Asymmetric dimethylarginine; by PRMT1; alternate. Arginine 4 is subject to Citrulline; alternate. Position 4 is an omega-N-methylarginine; by PRMT1; alternate (arginine 4). Arginine 4 is modified (symmetric dimethylarginine; by PRMT5 and PRMT7; alternate). Residues lysine 6, lysine 9, lysine 13, and lysine 17 each carry the N6-(2-hydroxyisobutyryl)lysine; alternate modification. Lysine 6 is subject to N6-acetyl-N6-methyllysine; alternate. An N6-acetyllysine mark is found at lysine 6, lysine 9, lysine 13, and lysine 17. 4 positions are modified to N6-butyryllysine; alternate: lysine 6, lysine 9, lysine 13, and lysine 17. Residue lysine 6 is modified to N6-glutaryllysine; alternate. An N6-lactoyllysine; alternate mark is found at lysine 6, lysine 9, lysine 13, and lysine 17. Lysine 9 bears the N6-propionyllysine; alternate mark. Lysine 13 carries the N6-acetyl-N6-methyllysine; alternate modification. An N6-glutaryllysine; alternate modification is found at lysine 13. Position 13 is an N6-methyllysine; alternate (lysine 13). At lysine 17 the chain carries N6-propionyllysine; alternate. A DNA-binding region spans residues 17–21 (KRHRK). Lysine 21 carries the post-translational modification N6-methyllysine; alternate. Lysine 21 is modified (N6,N6,N6-trimethyllysine; alternate). An N6,N6-dimethyllysine; alternate modification is found at lysine 21. Lysine 21 is modified (N6-methylated lysine). 2 positions are modified to N6-(2-hydroxyisobutyryl)lysine; alternate: lysine 32 and lysine 45. N6-acetyllysine is present on lysine 32. N6-butyryllysine; alternate occurs at positions 32 and 45. Position 32 is an N6-glutaryllysine; alternate (lysine 32). An N6-lactoyllysine; alternate modification is found at lysine 32. An N6-propionyllysine; alternate mark is found at lysine 32 and lysine 45. N6-succinyllysine; alternate is present on lysine 32. Lysine 32 participates in a covalent cross-link: Glycyl lysine isopeptide (Lys-Gly) (interchain with G-Cter in UFM1); alternate. Serine 48 carries the post-translational modification Phosphoserine; by PAK2. Tyrosine 52 bears the Phosphotyrosine mark. Residue lysine 60 is modified to N6-acetyllysine. 3 positions are modified to N6-glutaryllysine; alternate: lysine 60, lysine 78, and lysine 80. The residue at position 60 (lysine 60) is an N6-(2-hydroxyisobutyryl)lysine. N6-(2-hydroxyisobutyryl)lysine; alternate is present on residues lysine 78 and lysine 80. Residues lysine 78 and lysine 80 each carry the N6-butyryllysine; alternate modification. Lysine 78 is subject to N6-lactoyllysine; alternate. Lysine 78 and lysine 80 each carry N6-propionyllysine; alternate. Lysine 78 bears the N6-succinyllysine mark. The residue at position 80 (lysine 80) is an N6-acetyllysine. Tyrosine 89 bears the Phosphotyrosine mark. An N6-(2-hydroxyisobutyryl)lysine; alternate modification is found at lysine 92. Residue lysine 92 is modified to N6-butyryllysine; alternate. Lysine 92 carries the N6-glutaryllysine; alternate modification. Lysine 92 carries the post-translational modification N6-lactoyllysine; alternate. N6-propionyllysine; alternate is present on lysine 92. Lysine 92 bears the N6-succinyllysine; alternate mark. Lysine 92 carries the post-translational modification N6-acetyllysine; alternate. A Glycyl lysine isopeptide (Lys-Gly) (interchain with G-Cter in ubiquitin); alternate cross-link involves residue lysine 92.

The protein belongs to the histone H4 family. The nucleosome is a histone octamer containing two molecules each of H2A, H2B, H3 and H4 assembled in one H3-H4 heterotetramer and two H2A-H2B heterodimers. The octamer wraps approximately 147 bp of DNA. In terms of processing, acetylation at Lys-6 (H4K5ac), Lys-9 (H4K8ac), Lys-13 (H4K12ac) and Lys-17 (H4K16ac) occurs in coding regions of the genome but not in heterochromatin. Citrullination at Arg-4 (H4R3ci) by PADI4 impairs methylation. Post-translationally, monomethylation and asymmetric dimethylation at Arg-4 (H4R3me1 and H4R3me2a, respectively) by PRMT1 favors acetylation at Lys-9 (H4K8ac) and Lys-13 (H4K12ac). Demethylation is performed by JMJD6. Symmetric dimethylation on Arg-4 (H4R3me2s) by the PRDM1/PRMT5 complex may play a crucial role in the germ-cell lineage. In terms of processing, monomethylated, dimethylated or trimethylated at Lys-21 (H4K20me1, H4K20me2, H4K20me3). Monomethylation is performed by KMT5A/SET8. Trimethylation is performed by KMT5B and KMT5C and induces gene silencing. Monomethylated at Lys-13 (H4K12me1) by N6AMT1; H4K12me1 modification is present at the promoters of numerous genes encoding cell cycle regulators. Acetyl-methylated at Lys-6 and Lys-13 (H4K5acme and H4K12acme, respectively), acetyl-methylation is an epigenetic mark of active chromatin associated with increased transcriptional initiation. Acetyl-methylation is formed by acetylation by EP300/p300 of lysine residues that are already monomethylated on the same side chain. H4K5acme and H4K12acme marks specifically bind BRD2. Post-translationally, phosphorylated by pak2 at Ser-48 (H4S47ph). This phosphorylation increases the association of H3.3-H4 with the histone chaperone HIRA, thus promoting nucleosome assembly of H3.3-H4 and inhibiting nucleosome assembly of H3.1-H4. In terms of processing, ubiquitinated by the CUL4-DDB-RBX1 complex in response to ultraviolet irradiation. This may weaken the interaction between histones and DNA and facilitate DNA accessibility to repair proteins. Monoubiquitinated at Lys-92 of histone H4 (H4K91ub1) in response to DNA damage. The exact role of H4K91ub1 in DNA damage response is still unclear but it may function as a licensing signal for additional histone H4 post-translational modifications such as H4 Lys-21 methylation (H4K20me). Sumoylated, which is associated with transcriptional repression. Post-translationally, butyrylation of histones marks active promoters and competes with histone acetylation. In terms of processing, glutarylation at Lys-92 (H4K91glu) destabilizes nucleosomes by promoting dissociation of the H2A-H2B dimers from nucleosomes. Ufmylated; monofmylated by UFL1 at Lys-32 (H4K31Ufm1) in response to DNA damage. Post-translationally, lactylated in macrophages by EP300/P300 by using lactoyl-CoA directly derived from endogenous or exogenous lactate, leading to stimulates gene transcription. Delactylated by SIRT3 at Lys-17 (H4K16la).

It localises to the nucleus. Its subcellular location is the chromosome. Functionally, core component of nucleosome. Nucleosomes wrap and compact DNA into chromatin, limiting DNA accessibility to the cellular machineries which require DNA as a template. Histones thereby play a central role in transcription regulation, DNA repair, DNA replication and chromosomal stability. DNA accessibility is regulated via a complex set of post-translational modifications of histones, also called histone code, and nucleosome remodeling. In Xenopus laevis (African clawed frog), this protein is Histone H4.